The sequence spans 121 residues: Protein MGF 110-14L (121 aa).

Residues 1–17 (MKVLLGLLLGYSVLILA) form the signal peptide.

It belongs to the asfivirus MGF 110 family.

This African swine fever virus (isolate Portugal/Lis 57/1957) (ASFV) protein is Protein MGF 110-14L.